The following is a 361-amino-acid chain: Probable dual-specificity RNA methyltransferase RlmN (361 aa).

Catalysis depends on E91, which acts as the Proton acceptor. Residues 97–329 (QHYGLSVCVT…KKKGGNCVVR (233 aa)) form the Radical SAM core domain. C104 and C340 are disulfide-bonded. [4Fe-4S] cluster is bound by residues C111, C115, and C118. Residues 163–164 (GE), S195, 218–220 (SLH), and N296 each bind S-adenosyl-L-methionine. C340 serves as the catalytic S-methylcysteine intermediate.

Belongs to the radical SAM superfamily. RlmN family. The cofactor is [4Fe-4S] cluster.

The protein localises to the cytoplasm. It carries out the reaction adenosine(2503) in 23S rRNA + 2 reduced [2Fe-2S]-[ferredoxin] + 2 S-adenosyl-L-methionine = 2-methyladenosine(2503) in 23S rRNA + 5'-deoxyadenosine + L-methionine + 2 oxidized [2Fe-2S]-[ferredoxin] + S-adenosyl-L-homocysteine. The enzyme catalyses adenosine(37) in tRNA + 2 reduced [2Fe-2S]-[ferredoxin] + 2 S-adenosyl-L-methionine = 2-methyladenosine(37) in tRNA + 5'-deoxyadenosine + L-methionine + 2 oxidized [2Fe-2S]-[ferredoxin] + S-adenosyl-L-homocysteine. Its function is as follows. Specifically methylates position 2 of adenine 2503 in 23S rRNA and position 2 of adenine 37 in tRNAs. The sequence is that of Probable dual-specificity RNA methyltransferase RlmN from Streptococcus pneumoniae (strain Hungary19A-6).